The sequence spans 146 residues: NADH-quinone oxidoreductase subunit A (146 aa).

The next 3 helical transmembrane spans lie at 14–34 (FGLF…GGFL), 68–88 (LVAM…AWAV), and 96–116 (IGFI…IYLV).

Belongs to the complex I subunit 3 family. As to quaternary structure, NDH-1 is composed of 13 different subunits. Subunits NuoA, H, J, K, L, M, N constitute the membrane sector of the complex.

The protein localises to the cell inner membrane. It carries out the reaction a quinone + NADH + 5 H(+)(in) = a quinol + NAD(+) + 4 H(+)(out). In terms of biological role, NDH-1 shuttles electrons from NADH, via FMN and iron-sulfur (Fe-S) centers, to quinones in the respiratory chain. The immediate electron acceptor for the enzyme in this species is believed to be ubiquinone. Couples the redox reaction to proton translocation (for every two electrons transferred, four hydrogen ions are translocated across the cytoplasmic membrane), and thus conserves the redox energy in a proton gradient. In Pectobacterium carotovorum subsp. carotovorum (Erwinia carotovora subsp. carotovora), this protein is NADH-quinone oxidoreductase subunit A.